A 251-amino-acid polypeptide reads, in one-letter code: Methionine aminopeptidase (251 aa).

His-76 contributes to the substrate binding site. Positions 93, 104, and 168 each coordinate a divalent metal cation. His-175 is a substrate binding site. A divalent metal cation contacts are provided by Glu-202 and Glu-233.

Belongs to the peptidase M24A family. Methionine aminopeptidase type 1 subfamily. In terms of assembly, monomer. It depends on Co(2+) as a cofactor. Requires Zn(2+) as cofactor. Mn(2+) serves as cofactor. Fe(2+) is required as a cofactor.

The enzyme catalyses Release of N-terminal amino acids, preferentially methionine, from peptides and arylamides.. Functionally, removes the N-terminal methionine from nascent proteins. The N-terminal methionine is often cleaved when the second residue in the primary sequence is small and uncharged (Met-Ala-, Cys, Gly, Pro, Ser, Thr, or Val). Requires deformylation of the N(alpha)-formylated initiator methionine before it can be hydrolyzed. This chain is Methionine aminopeptidase, found in Staphylococcus epidermidis (strain ATCC 12228 / FDA PCI 1200).